Consider the following 512-residue polypeptide: Gasdermin-E (512 aa).

Residues 1-56 (MFAKATRNFLKEVDAGGDLISVSHLNDSDKLQLLSLVTKKKRYWCWQRPKYQILSA) are membrane targeting domain. C45 is modified (S-(2-succinyl)cysteine). K120 is covalently cross-linked (Glycyl lysine isopeptide (Lys-Gly) (interchain with G-Cter in ubiquitin)). 3 positions are modified to S-(2-succinyl)cysteine: C156, C168, and C180. A Glycyl lysine isopeptide (Lys-Gly) (interchain with G-Cter in ubiquitin) cross-link involves residue K189. 3 positions are modified to S-(2-succinyl)cysteine: C235, C411, and C420.

The protein belongs to the gasdermin family. Homooligomer; homooligomeric ring-shaped pore complex containing 27-28 subunits when inserted in the membrane. In terms of processing, cleavage at Asp-270 by CASP3 (mature and uncleaved precursor forms) or granzyme B (GZMB) relieves autoinhibition and is sufficient to initiate pyroptosis. Succination by the Krebs cycle intermediate fumarate, which leads to S-(2-succinyl)cysteine residues, inhibits processing by caspases, and ability to initiate pyroptosis. Succination modification is catalyzed by a non-enzymatic reaction caused by an accumulation of fumarate. Post-translationally, ubiquitinated on Lys-120 and Lys-189 via 'Lys-48'-linked polyubiquitin chains, leading to proteasomal degradation. Deubiquitinated by USP48, leading to increased stability. In terms of processing, palmitoylated. As to expression, expressed in spleen, kidney, large and small intestine, testicle, stomach and by CD4(+)CD(8+) T cells in thymus. Expressed by macrophages.

Its subcellular location is the cell membrane. It is found in the cytoplasm. It localises to the cytosol. The full-length protein before cleavage is inactive: intramolecular interactions between N- and C-terminal domains mediate autoinhibition in the absence of activation signal. The intrinsic pyroptosis-inducing activity is carried by the released N-terminal moiety (Gasdermin-E, N-terminal) following cleavage by CASP3 or granzyme B (GZMB). Activated by NLRP1 in the absence of GSDMD expression: NLRP1 cleaves and activates CASP8, promoting downstream activation of CASP3 and subsequent activation of GSDME. Functionally, precursor of a pore-forming protein that converts non-inflammatory apoptosis to pyroptosis. This form constitutes the precursor of the pore-forming protein: upon cleavage, the released N-terminal moiety (Gasdermin-E, N-terminal) binds to membranes and forms pores, triggering pyroptosis. In terms of biological role, pore-forming protein produced by cleavage by CASP3 or granzyme B (GZMB), which converts non-inflammatory apoptosis to pyroptosis or promotes granzyme-mediated pyroptosis, respectively. After cleavage, moves to the plasma membrane, homooligomerizes within the membrane and forms pores of 10-15 nanometers (nm) of inner diameter, allowing the release of mature interleukins (IL1B and IL16) and triggering pyroptosis. Binds to inner leaflet lipids, bisphosphorylated phosphatidylinositols, such as phosphatidylinositol (4,5)-bisphosphate. Cleavage by CASP3 switches CASP3-mediated apoptosis induced by TNF or danger signals, such as chemotherapy drugs, to pyroptosis. Mediates secondary necrosis downstream of the mitochondrial apoptotic pathway and CASP3 activation as well as in response to viral agents. Exhibits bactericidal activity. Cleavage by GZMB promotes tumor suppressor activity by triggering robust anti-tumor immunity. Suppresses tumors by mediating granzyme-mediated pyroptosis in target cells of natural killer (NK) cells: cleavage by granzyme B (GZMB), delivered to target cells from NK-cells, triggers pyroptosis of tumor cells and tumor suppression. May play a role in the p53/TP53-regulated cellular response to DNA damage. This chain is Gasdermin-E, found in Mus musculus (Mouse).